The following is a 395-amino-acid chain: Acid ceramidase (395 aa).

A signal peptide spans 1–21 (MLGRSRLALVLLAAAVSCAVA). A disulfide bridge connects residues Cys31 and Cys340. Cys143 (nucleophile) is an active-site residue. Residues Asn173, Asn195, Asn259, Asn286, Asn342, and Asn348 are each glycosylated (N-linked (GlcNAc...) asparagine). A disulfide bond links Cys388 and Cys392.

It belongs to the acid ceramidase family. In terms of assembly, heterodimer; disulfide-linked. The heterodimer is composed of the disulfide-linked alpha and beta chains produced by autocatalytic cleavage of the precursor. In terms of processing, N-glycosylated. Post-translationally, proteolytically cleaved into two chains alpha and beta that remain associated via a disulfide bond. Cleavage gives rise to a conformation change that activates the enzyme. The same catalytic Cys residue mediates the autoproteolytic cleavage and subsequent hydrolysis of lipid substrates. The beta chain may undergo an additional C-terminal processing.

It is found in the lysosome. It localises to the secreted. The enzyme catalyses an N-acylsphing-4-enine + H2O = sphing-4-enine + a fatty acid. It carries out the reaction N-dodecanoylsphing-4-enine + H2O = dodecanoate + sphing-4-enine. It catalyses the reaction N-tetradecanoylsphing-4-enine + H2O = tetradecanoate + sphing-4-enine. The catalysed reaction is N-hexadecanoylsphing-4-enine + H2O = sphing-4-enine + hexadecanoate. The enzyme catalyses N-octadecanoylsphing-4-enine + H2O = sphing-4-enine + octadecanoate. It carries out the reaction N-dodecanoyl-(4R)-hydroxysphinganine + H2O = (4R)-hydroxysphinganine + dodecanoate. It catalyses the reaction N-(dodecanoyl)-sphinganine + H2O = dodecanoate + sphinganine. The catalysed reaction is N-(acetyl)-sphing-4-enine + H2O = sphing-4-enine + acetate. The enzyme catalyses N-(hexanoyl)sphing-4-enine + H2O = hexanoate + sphing-4-enine. It carries out the reaction N-octanoylsphing-4-enine + H2O = octanoate + sphing-4-enine. It catalyses the reaction N-(9Z-octadecenoyl)-sphing-4-enine + H2O = sphing-4-enine + (9Z)-octadecenoate. The catalysed reaction is N-dodecanoylethanolamine + H2O = dodecanoate + ethanolamine. Its pathway is lipid metabolism; sphingolipid metabolism. Functionally, lysosomal ceramidase that hydrolyzes sphingolipid ceramides into sphingosine and free fatty acids at acidic pH. Ceramides, sphingosine, and its phosphorylated form sphingosine-1-phosphate are bioactive lipids that mediate cellular signaling pathways regulating several biological processes including cell proliferation, apoptosis and differentiation. Has a higher catalytic efficiency towards C12-ceramides versus other ceramides. Also catalyzes the reverse reaction allowing the synthesis of ceramides from fatty acids and sphingosine. For the reverse synthetic reaction, the natural sphingosine D-erythro isomer is more efficiently utilized as a substrate compared to D-erythro-dihydrosphingosine and D-erythro-phytosphingosine, while the fatty acids with chain lengths of 12 or 14 carbons are the most efficiently used. Also has an N-acylethanolamine hydrolase activity. By regulating the levels of ceramides, sphingosine and sphingosine-1-phosphate in the epidermis, mediates the calcium-induced differentiation of epidermal keratinocytes. Also indirectly regulates tumor necrosis factor/TNF-induced apoptosis. By regulating the intracellular balance between ceramides and sphingosine, in adrenocortical cells, probably also acts as a regulator of steroidogenesis. The chain is Acid ceramidase from Macaca fascicularis (Crab-eating macaque).